The following is a 172-amino-acid chain: Large ribosomal subunit protein uL10 (172 aa).

This sequence belongs to the universal ribosomal protein uL10 family. As to quaternary structure, part of the ribosomal stalk of the 50S ribosomal subunit. The N-terminus interacts with L11 and the large rRNA to form the base of the stalk. The C-terminus forms an elongated spine to which L12 dimers bind in a sequential fashion forming a multimeric L10(L12)X complex.

Functionally, forms part of the ribosomal stalk, playing a central role in the interaction of the ribosome with GTP-bound translation factors. This chain is Large ribosomal subunit protein uL10, found in Rhizobium etli (strain ATCC 51251 / DSM 11541 / JCM 21823 / NBRC 15573 / CFN 42).